A 469-amino-acid polypeptide reads, in one-letter code: Probable acetate kinase (469 aa).

Asparagine 30 contributes to the Mg(2+) binding site. Lysine 37 is an ATP binding site. Arginine 122 contacts substrate. The active-site Proton donor/acceptor is aspartate 179. Residue 239 to 243 participates in ATP binding; the sequence is HLGSG. Glutamate 453 serves as a coordination point for Mg(2+).

The protein belongs to the acetokinase family. It depends on Mg(2+) as a cofactor.

The enzyme catalyses acetate + ATP = acetyl phosphate + ADP. Its pathway is metabolic intermediate biosynthesis; acetyl-CoA biosynthesis; acetyl-CoA from acetate: step 1/2. The polypeptide is Probable acetate kinase (Neurospora crassa (strain ATCC 24698 / 74-OR23-1A / CBS 708.71 / DSM 1257 / FGSC 987)).